A 103-amino-acid chain; its full sequence is Co-chaperonin GroES (103 aa).

Belongs to the GroES chaperonin family. Heptamer of 7 subunits arranged in a ring. Interacts with the chaperonin GroEL.

It is found in the cytoplasm. In terms of biological role, together with the chaperonin GroEL, plays an essential role in assisting protein folding. The GroEL-GroES system forms a nano-cage that allows encapsulation of the non-native substrate proteins and provides a physical environment optimized to promote and accelerate protein folding. GroES binds to the apical surface of the GroEL ring, thereby capping the opening of the GroEL channel. The protein is Co-chaperonin GroES of Synechococcus sp. (strain JA-3-3Ab) (Cyanobacteria bacterium Yellowstone A-Prime).